A 291-amino-acid polypeptide reads, in one-letter code: Ribosome biogenesis protein BRX1 (291 aa).

The Brix domain maps to 31 to 232 (QRTLLISSRG…VILILEGSFG (202 aa)). S285 carries the post-translational modification Phosphoserine.

Belongs to the BRX1 family. In terms of assembly, part of a complex that includes BRX1, RPF1, RPF2 and SSF1 or SSF2.

The protein resides in the nucleus. It is found in the nucleolus. Functionally, required for biogenesis of the 60S ribosomal subunit. The sequence is that of Ribosome biogenesis protein BRX1 (BRX1) from Saccharomyces cerevisiae (strain ATCC 204508 / S288c) (Baker's yeast).